We begin with the raw amino-acid sequence, 246 residues long: 5'-nucleotidase SurE (246 aa).

4 residues coordinate a divalent metal cation: D8, D9, S39, and N91.

The protein belongs to the SurE nucleotidase family. The cofactor is a divalent metal cation.

It localises to the cytoplasm. It carries out the reaction a ribonucleoside 5'-phosphate + H2O = a ribonucleoside + phosphate. Functionally, nucleotidase that shows phosphatase activity on nucleoside 5'-monophosphates. The protein is 5'-nucleotidase SurE of Mannheimia succiniciproducens (strain KCTC 0769BP / MBEL55E).